We begin with the raw amino-acid sequence, 452 residues long: 1,3-beta-glucanosyltransferase gel1 (452 aa).

An N-terminal signal peptide occupies residues 1 to 19 (MKASAVTAALAVGASTVLA). C71 and C100 are disulfide-bonded. (1,3-beta-D-glucosyl)n-binding residues include Y89, N159, E160, D201, and R206. E160 functions as the Proton donor in the catalytic mechanism. 2 disulfides stabilise this stretch: C215-C345 and C233-C264. N249 carries an N-linked (GlcNAc...) asparagine glycan. Catalysis depends on E261, which acts as the Nucleophile. Y292 contacts (1,3-beta-D-glucosyl)n. Positions 325-340 (EKTSNPSGDGNYNKTG) are enriched in polar residues. Residues 325–419 (EKTSNPSGDG…SGTSTSSKGA (95 aa)) form a disordered region. N337 carries N-linked (GlcNAc...) asparagine glycosylation. Residues 393-419 (STATAEPGSGSATGSSSSGTSTSSKGA) show a composition bias toward low complexity. A419 carries the GPI-like-anchor amidated alanine lipid modification. Positions 420-452 (AAGLTVPSLTMAPVVVGAVTLLSTVFGAGLVLL) are cleaved as a propeptide — removed in mature form.

This sequence belongs to the glycosyl hydrolase 72 family. The GPI-like anchor contains a phosphoceramide lipid group.

It is found in the cell membrane. In terms of biological role, splits internally a 1,3-beta-glucan molecule and transfers the newly generated reducing end (the donor) to the non-reducing end of another 1,3-beta-glucan molecule (the acceptor) forming a 1,3-beta linkage, resulting in the elongation of 1,3-beta-glucan chains in the cell wall. Involved in cell wall morphogenesis. This chain is 1,3-beta-glucanosyltransferase gel1 (gel1), found in Aspergillus fumigatus (strain ATCC MYA-4609 / CBS 101355 / FGSC A1100 / Af293) (Neosartorya fumigata).